A 419-amino-acid polypeptide reads, in one-letter code: GTPase Obg (419 aa).

One can recognise an Obg domain in the interval 1–158 (MFVDQARIFV…KWIRLELKLL (158 aa)). In terms of domain architecture, OBG-type G spans 159–327 (ADVGLVGFPN…LMGKTYALLQ (169 aa)). GTP is bound by residues 165-172 (GFPNAGKS), 190-194 (FTTLV), 212-215 (DIPG), 282-285 (NKMD), and 308-310 (SAV). Residues S172 and T192 each contribute to the Mg(2+) site. The region spanning 342 to 419 (RRFEEELPFK…IKDFEFEFTE (78 aa)) is the OCT domain.

This sequence belongs to the TRAFAC class OBG-HflX-like GTPase superfamily. OBG GTPase family. Monomer. Mg(2+) is required as a cofactor.

It is found in the cytoplasm. Functionally, an essential GTPase which binds GTP, GDP and possibly (p)ppGpp with moderate affinity, with high nucleotide exchange rates and a fairly low GTP hydrolysis rate. Plays a role in control of the cell cycle, stress response, ribosome biogenesis and in those bacteria that undergo differentiation, in morphogenesis control. This Syntrophomonas wolfei subsp. wolfei (strain DSM 2245B / Goettingen) protein is GTPase Obg.